Reading from the N-terminus, the 282-residue chain is Shikimate dehydrogenase (NADP(+)) (282 aa).

Shikimate is bound by residues 18–20 (SRS) and Thr65. Catalysis depends on Lys69, which acts as the Proton acceptor. Residue Glu81 coordinates NADP(+). Residues Asn90 and Asp105 each contribute to the shikimate site. NADP(+)-binding positions include 130-134 (GAGGA), 154-159 (NRTPAR), and Met222. Tyr224 contributes to the shikimate binding site. Gly245 lines the NADP(+) pocket.

Belongs to the shikimate dehydrogenase family. As to quaternary structure, homodimer.

The enzyme catalyses shikimate + NADP(+) = 3-dehydroshikimate + NADPH + H(+). Its pathway is metabolic intermediate biosynthesis; chorismate biosynthesis; chorismate from D-erythrose 4-phosphate and phosphoenolpyruvate: step 4/7. Involved in the biosynthesis of the chorismate, which leads to the biosynthesis of aromatic amino acids. Catalyzes the reversible NADPH linked reduction of 3-dehydroshikimate (DHSA) to yield shikimate (SA). The protein is Shikimate dehydrogenase (NADP(+)) of Acidovorax sp. (strain JS42).